The primary structure comprises 245 residues: Large ribosomal subunit protein eL29 (245 aa).

The span at 1 to 26 (MAKSKNHTTHNQSRKWHRNGIKKPRS) shows a compositional bias: basic residues. 2 disordered regions span residues 1-33 (MAKS…ESLK) and 114-245 (RGLR…AKAP). Position 5 is an N6-methyllysine (lysine 5). Residue serine 31 is modified to Phosphoserine. An N6-acetyllysine modification is found at lysine 33. The span at 134 to 150 (KGKVKAQIKAQAQAQIK) shows a compositional bias: low complexity. The span at 157 to 171 (AQAETKPKAQAETKP) shows a compositional bias: basic and acidic residues. 2 stretches are compositionally biased toward low complexity: residues 172-226 (KAQA…ATPA) and 234-245 (PPKGAQPPAKAP).

Belongs to the eukaryotic ribosomal protein eL29 family. As to quaternary structure, component of the large ribosomal subunit.

The protein resides in the cytoplasm. Its function is as follows. Component of the large ribosomal subunit. The ribosome is a large ribonucleoprotein complex responsible for the synthesis of proteins in the cell. The chain is Large ribosomal subunit protein eL29 (RPL29) from Oryctolagus cuniculus (Rabbit).